We begin with the raw amino-acid sequence, 212 residues long: Thymidylate kinase (212 aa).

10-17 (GLEGAGKT) serves as a coordination point for ATP.

This sequence belongs to the thymidylate kinase family.

It catalyses the reaction dTMP + ATP = dTDP + ADP. Phosphorylation of dTMP to form dTDP in both de novo and salvage pathways of dTTP synthesis. This is Thymidylate kinase from Yersinia enterocolitica serotype O:8 / biotype 1B (strain NCTC 13174 / 8081).